The sequence spans 408 residues: MSAATPPTERRVSARVGAISESATLAVDAKAKALKAAGRPVIGFGAGEPDFPTPDYIVQAAIEACSNPKYHRYTPAGGLPELKAAIAAKTLRDSGYEVDASQVLVTNGGKQAIYEAFAAILDPGDEVIVPAPYWTTYPESIRLAGGVPVDVVADETTGYRVSVEQLEAARTENTKVLLFVSPSNPTGAVYTREQIEEIGRWAAEKGLWVLTDEIYEHLVYGDAEFHSLPVVVPELADKCIVVNGVAKTYAMTGWRVGWVIGPKDVIKAATNLQSHATSNVSNVAQVAALAAVSGDLTAVAEMREAFDRRRKTIVRMLNEIGGVLCPEPEGAFYAYPSVKALLGKEIRGKRPQDTVELAALILEEAEVAVVPGEAFGTPGYLRLSYALGDEDLVEGVSRIQKLLSEAKD.

L-aspartate-binding residues include glycine 45, tryptophan 134, and asparagine 184. The residue at position 247 (lysine 247) is an N6-(pyridoxal phosphate)lysine. Arginine 382 is an L-aspartate binding site.

This sequence belongs to the class-I pyridoxal-phosphate-dependent aminotransferase family. In terms of assembly, homodimer. Pyridoxal 5'-phosphate is required as a cofactor.

It localises to the cytoplasm. The enzyme catalyses L-aspartate + 2-oxoglutarate = oxaloacetate + L-glutamate. Catalyzes the reversible conversion of aspartate and 2-oxoglutarate to glutamate and oxaloacetate. Does not have prephenate aminotransferase activity. The sequence is that of Aspartate aminotransferase from Streptomyces avermitilis (strain ATCC 31267 / DSM 46492 / JCM 5070 / NBRC 14893 / NCIMB 12804 / NRRL 8165 / MA-4680).